A 1370-amino-acid polypeptide reads, in one-letter code: Major capsid protein (1370 aa).

This sequence belongs to the herpesviridae major capsid protein family. In terms of assembly, homomultimer. Makes the hexons and eleven out of twelve pentons. Interacts with triplex proteins 1/TRX1 and 2/TRX2; adjacent capsomers are linked together in groups of three by triplexes, heterotrimeric complexes composed of one molecule of TRX1 and two molecules of TRX2. Interacts with scaffold protein; this interaction allows efficient MCP transport to the host nucleus. Interacts with capsid vertex component 2/CVC2. Interacts with the small capsomere-interacting protein/SCP.

It is found in the virion. The protein resides in the host nucleus. Its function is as follows. Self-assembles to form an icosahedral capsid with a T=16 symmetry, about 200 nm in diameter, and consisting of 150 hexons and 12 pentons (total of 162 capsomers). Hexons form the edges and faces of the capsid and are each composed of six MCP molecules. In contrast, one penton is found at each of the 12 vertices. Eleven of the pentons are MCP pentamers, while the last vertex is occupied by the portal complex. The capsid is surrounded by a layer of proteinaceous material designated the tegument which, in turn, is enclosed in an envelope of host cell-derived lipids containing virus-encoded glycoproteins. This Human cytomegalovirus (strain AD169) (HHV-5) protein is Major capsid protein.